The following is a 311-amino-acid chain: Malate dehydrogenase (311 aa).

NAD(+)-binding positions include 7–13 (GAAGGIG) and Asp-34. Arg-81 and Arg-87 together coordinate substrate. Residues Asn-94 and 117–119 (ITN) contribute to the NAD(+) site. Asn-119 and Arg-153 together coordinate substrate. His-177 (proton acceptor) is an active-site residue. Met-227 serves as a coordination point for NAD(+).

Belongs to the LDH/MDH superfamily. MDH type 1 family. As to quaternary structure, homodimer.

It carries out the reaction (S)-malate + NAD(+) = oxaloacetate + NADH + H(+). Functionally, catalyzes the reversible oxidation of malate to oxaloacetate. This chain is Malate dehydrogenase, found in Histophilus somni (strain 129Pt) (Haemophilus somnus).